A 519-amino-acid chain; its full sequence is Transmembrane protein 180 (519 aa).

Residues 1-11 are Extracellular-facing; it reads MGLDWPQAWLL. Residues 12-43 form a helical membrane-spanning segment; that stretch reads GLPIAVVYGSLALFTSILHNVFLLYYVDTFVS. Residues 44–55 lie on the Cytoplasmic side of the membrane; that stretch reads VYKINKVSFWVG. A helical transmembrane segment spans residues 56-74; the sequence is ETVFLLWNSFNDPLFGWLS. Over 75–100 the chain is Extracellular; sequence DRQLLSSQPRSGAGLSSRDVVLTRVR. A helical membrane pass occupies residues 101–118; it reads ALGWHGPLLALSFLAFWV. The Cytoplasmic segment spans residues 119–126; it reads PWAPAGLQ. Residues 127 to 151 traverse the membrane as a helical segment; the sequence is FLLCLCLYDGFLTLVDLHHHALLAD. Residues 152-155 are Extracellular-facing; the sequence is LALS. A helical membrane pass occupies residues 156–179; the sequence is SHDRTHLNFYCSLFSAAGSLSVFA. Residues 180 to 191 lie on the Cytoplasmic side of the membrane; it reads SYAFWNKEDFSS. A helical transmembrane segment spans residues 192 to 223; that stretch reads FRAFCVVLAAGSGLGFLGTTQLLKRQIEATRR. The Extracellular portion of the chain corresponds to 224–264; the sequence is DRGCPGLDLDGGVCEEEPPVGGEEAGNITLGQYLRQLARHQ. The N-linked (GlcNAc...) asparagine glycan is linked to asparagine 250. Residues 265-292 form a helical membrane-spanning segment; it reads NFLWFVGMDLVQVFHCHFNSNFFPLFLE. Residues 293–305 lie on the Cytoplasmic side of the membrane; that stretch reads HLLSDHISLSTGS. Residues 306–325 traverse the membrane as a helical segment; it reads FLLGISYVAPHLNNLYFLPL. Residues 326 to 330 lie on the Extracellular side of the membrane; the sequence is CRRWG. The helical transmembrane segment at 331-350 threads the bilayer; sequence VYAVVRGLFLLKLSLSLLML. At 351–358 the chain is on the cytoplasmic side; the sequence is LAGPDHPG. Residues 359–393 form a helical membrane-spanning segment; that stretch reads LLCFFIASNRVFTEGTCKLLTLVVTDLVDEDLVLN. Topologically, residues 394–402 are extracellular; sequence HRKQAASAL. Residues 403–429 traverse the membrane as a helical segment; that stretch reads LFGMVALVTKPGQTFAPLLGTWLLCFY. Residues 430–468 lie on the Cytoplasmic side of the membrane; the sequence is TGHDLFQQSPMTPVGSVRPWPELPAPAPAPAQAPTLRQG. The helical transmembrane segment at 469–487 threads the bilayer; it reads CFYLLVFVPITCALLQLFT. At 488-519 the chain is on the extracellular side; that stretch reads WSQFTLHGRRLRTVKAQRQNLAQIHTLNIKMV.

It localises to the cell membrane. The polypeptide is Transmembrane protein 180 (Mus musculus (Mouse)).